A 232-amino-acid polypeptide reads, in one-letter code: Large ribosomal subunit protein uL1 (232 aa).

It belongs to the universal ribosomal protein uL1 family. In terms of assembly, part of the 50S ribosomal subunit.

Functionally, binds directly to 23S rRNA. The L1 stalk is quite mobile in the ribosome, and is involved in E site tRNA release. Protein L1 is also a translational repressor protein, it controls the translation of the L11 operon by binding to its mRNA. This is Large ribosomal subunit protein uL1 from Pelotomaculum thermopropionicum (strain DSM 13744 / JCM 10971 / SI).